The following is a 1029-amino-acid chain: U2 snRNP-associated SURP motif-containing protein (1029 aa).

2 disordered regions span residues 1 to 111 (MADK…EDEK) and 141 to 274 (VNAA…PSTT). At alanine 2 the chain carries N-acetylalanine. Residues 7–16 (GGSQKASSKT) are compositionally biased toward polar residues. Over residues 45–54 (TRPKSPRKHN) the composition is skewed to basic residues. Over residues 55–64 (YRNESARESL) the composition is skewed to basic and acidic residues. Phosphoserine is present on serine 67. Lysine 80 is covalently cross-linked (Glycyl lysine isopeptide (Lys-Gly) (interchain with G-Cter in SUMO2)). Residues 92–121 (AKRTLSKKEQEELKKKEDEKAAAEIYEEFL) adopt a coiled-coil conformation. Composition is skewed to basic and acidic residues over residues 97-111 (SKKE…EDEK) and 144-155 (AKEEHETDEKRG). Glycyl lysine isopeptide (Lys-Gly) (interchain with G-Cter in SUMO2) cross-links involve residues lysine 145 and lysine 168. Residues 169 to 178 (NPPNQSSNER) show a composition bias toward polar residues. Residues 186-222 (ETKKPPLKKGEKEKKKSNLELFKEELKQIQEERDERH) show a composition bias toward basic and acidic residues. A coiled-coil region spans residues 192 to 232 (LKKGEKEKKKSNLELFKEELKQIQEERDERHKTKGRLSRFE). A Phosphoserine modification is found at serine 202. Residue lysine 208 forms a Glycyl lysine isopeptide (Lys-Gly) (interchain with G-Cter in SUMO2) linkage. Phosphoserine is present on serine 236. The span at 239-249 (DGQRRSMDAPS) shows a compositional bias: basic and acidic residues. In terms of domain architecture, RRM spans 274–355 (TNLYLGNINP…FEMKLGWGKA (82 aa)). One copy of the SURP motif repeat lies at 430–473 (LIHRMIEFVVREGPMFEAMIMNREINNPMFRFLFENQTPAHVYY). Phosphoserine is present on serine 485. The CID domain maps to 534 to 679 (LKEEQRDKLE…KLQNIFLGLV (146 aa)). Residue threonine 719 is modified to Phosphothreonine. Residues lysine 748 and lysine 749 each participate in a glycyl lysine isopeptide (Lys-Gly) (interchain with G-Cter in SUMO2) cross-link. Lysine 760 is modified (N6-acetyllysine; alternate). Residue lysine 760 forms a Glycyl lysine isopeptide (Lys-Gly) (interchain with G-Cter in SUMO2); alternate linkage. Disordered stretches follow at residues 778–841 (KWEL…EEKR) and 855–1029 (QDEL…KNKH). Residues 786–806 (EESEEEENQNQEEESEDEEDT) are compositionally biased toward acidic residues. 3 positions are modified to phosphoserine: serine 788, serine 800, and serine 811. Basic and acidic residues-rich tracts occupy residues 810–841 (KSEE…EEKR) and 874–922 (QVEH…TPTR). Glycyl lysine isopeptide (Lys-Gly) (interchain with G-Cter in SUMO2) cross-links involve residues lysine 822, lysine 829, and lysine 832. A coiled-coil region spans residues 837–915 (SEEKRAKLRE…ESRSKDKKEK (79 aa)). A Phosphothreonine modification is found at threonine 931. Serine 946 and serine 948 each carry phosphoserine. Residues 950 to 980 (KSERSERSERSHKESSRSRSSHKDSPRDVSK) are compositionally biased toward basic and acidic residues. Positions 991–1029 (TPKRSRRSRSRSPKKSGKKSRSQSRSPHRSHKKSKKNKH) are enriched in basic residues.

The protein belongs to the splicing factor SR family. Interacts with ERBB4.

It localises to the nucleus. The polypeptide is U2 snRNP-associated SURP motif-containing protein (U2SURP) (Homo sapiens (Human)).